A 161-amino-acid chain; its full sequence is Allophycocyanin beta chain (161 aa).

N4-methylasparagine is present on Asn-71. Residue Cys-81 participates in (2R,3E)-phycocyanobilin binding.

It belongs to the phycobiliprotein family. As to quaternary structure, heterodimer of an alpha and a beta chain. Post-translationally, contains one covalently linked phycocyanobilin chromophore.

It is found in the cellular thylakoid membrane. In terms of biological role, light-harvesting photosynthetic bile pigment-protein from the phycobiliprotein complex. Allophycocyanin has a maximum absorption at approximately 650 nanometers. This Anabaena cylindrica protein is Allophycocyanin beta chain (apcB).